We begin with the raw amino-acid sequence, 288 residues long: MRQTADLYCVLGNPIAHSRSPAIHARFAELTGERIRYERRLLPIDGFARGLRDFAAQGGRGCSVTVPFKTEALRCATACSERAQLAGAANTLSLHADGSISADNTDGLGLVADITRNAGIALAGCDVLLVGAGGAAAGVLGPLLHAGVRHITVANRTLAKAQALVQSHSALAALRKTQLKACGLQAPLADFDIIINASASSLAGADVPVPASVLRPASLAYDMMYGPAAQGFLDWARRHGARPRDGLGMLVEQAAEAFWLWRGLRPPSAQVLAELQEAAAKPASGADR.

Shikimate contacts are provided by residues 18–20 and T65; that span reads SRS. Catalysis depends on K69, which acts as the Proton acceptor. An NADP(+)-binding site is contributed by E81. The shikimate site is built by N90 and D106. NADP(+) is bound by residues 131–135, 155–160, and M223; these read GAGGA and NRTLAK. Y225 is a binding site for shikimate. G246 serves as a coordination point for NADP(+).

It belongs to the shikimate dehydrogenase family. As to quaternary structure, homodimer.

It carries out the reaction shikimate + NADP(+) = 3-dehydroshikimate + NADPH + H(+). It functions in the pathway metabolic intermediate biosynthesis; chorismate biosynthesis; chorismate from D-erythrose 4-phosphate and phosphoenolpyruvate: step 4/7. Its function is as follows. Involved in the biosynthesis of the chorismate, which leads to the biosynthesis of aromatic amino acids. Catalyzes the reversible NADPH linked reduction of 3-dehydroshikimate (DHSA) to yield shikimate (SA). The chain is Shikimate dehydrogenase (NADP(+)) from Verminephrobacter eiseniae (strain EF01-2).